The sequence spans 70 residues: Protein FlmC (70 aa).

Component of a type I toxin-antitoxin (TA) system. Either this protein or sequences upstream of it are required for translation of downstream flmA; this could be translationally coupled to flmA. This is Protein FlmC (flmC) from Escherichia coli (strain K12).